The sequence spans 143 residues: Nucleoside diphosphate kinase (143 aa).

ATP is bound by residues Lys-11, Phe-59, Arg-87, Thr-93, Arg-104, and Asn-114. The active-site Pros-phosphohistidine intermediate is the His-117.

The protein belongs to the NDK family. In terms of assembly, homotetramer. The cofactor is Mg(2+).

The protein resides in the cytoplasm. It catalyses the reaction a 2'-deoxyribonucleoside 5'-diphosphate + ATP = a 2'-deoxyribonucleoside 5'-triphosphate + ADP. It carries out the reaction a ribonucleoside 5'-diphosphate + ATP = a ribonucleoside 5'-triphosphate + ADP. Functionally, major role in the synthesis of nucleoside triphosphates other than ATP. The ATP gamma phosphate is transferred to the NDP beta phosphate via a ping-pong mechanism, using a phosphorylated active-site intermediate. The sequence is that of Nucleoside diphosphate kinase from Nitrosococcus oceani (strain ATCC 19707 / BCRC 17464 / JCM 30415 / NCIMB 11848 / C-107).